The primary structure comprises 242 residues: Uridylate kinase (242 aa).

ATP is bound at residue 11-14 (KLSG). Positions 19–24 (GNMGYG) are involved in allosteric activation by GTP. Gly-53 contacts UMP. The ATP site is built by Gly-54 and Arg-58. UMP is bound by residues Asp-73 and 134–141 (SGNPFFTT). 3 residues coordinate ATP: Thr-161, Tyr-167, and Asp-170.

The protein belongs to the UMP kinase family. Homohexamer.

The protein localises to the cytoplasm. The catalysed reaction is UMP + ATP = UDP + ADP. It participates in pyrimidine metabolism; CTP biosynthesis via de novo pathway; UDP from UMP (UMPK route): step 1/1. Its activity is regulated as follows. Allosterically activated by GTP. Inhibited by UTP. Functionally, catalyzes the reversible phosphorylation of UMP to UDP. This Trichormus variabilis (strain ATCC 29413 / PCC 7937) (Anabaena variabilis) protein is Uridylate kinase.